A 130-amino-acid chain; its full sequence is Ribosome-binding factor A (130 aa).

This sequence belongs to the RbfA family. Monomer. Binds 30S ribosomal subunits, but not 50S ribosomal subunits or 70S ribosomes.

The protein resides in the cytoplasm. Functionally, one of several proteins that assist in the late maturation steps of the functional core of the 30S ribosomal subunit. Associates with free 30S ribosomal subunits (but not with 30S subunits that are part of 70S ribosomes or polysomes). Required for efficient processing of 16S rRNA. May interact with the 5'-terminal helix region of 16S rRNA. This is Ribosome-binding factor A from Flavobacterium johnsoniae (strain ATCC 17061 / DSM 2064 / JCM 8514 / BCRC 14874 / CCUG 350202 / NBRC 14942 / NCIMB 11054 / UW101) (Cytophaga johnsonae).